A 324-amino-acid chain; its full sequence is MGARGKTLVPLLVVVATAAMALQSTYLQVDPEKPELQEPDLLSGPCGHRTIPSRIVGGDDAELGRWPWQGSLRVWGNHLCGATLLNRRWVLTAAHCFQKDNDPFDWTVQFGELTSRPSLWNLQAYSNRYQIEDIFLSPKYSEQYPNDIALLKLSSPVTYNNFIQPICLLNSTYKFENRTDCWVTGWGAIGEDESLPSPNTLQEVQVAIINNSMCNHMYKKPDFRTNIWGDMVCAGTPEGGKDACFGDSGGPLACDQDTVWYQVGVVSWGIGCGRPNRPGVYTNISHHYNWIQSTMIRNGLLRPDPVPLLLFLTLAWASSLLRPA.

Residues 1-21 (MGARGKTLVPLLVVVATAAMA) form the signal peptide. Positions 22 to 54 (LQSTYLQVDPEKPELQEPDLLSGPCGHRTIPSR) are excised as a propeptide. 2 cysteine pairs are disulfide-bonded: C46–C167 and C80–C96. Residues 55 to 296 (IVGGDDAELG…HYNWIQSTMI (242 aa)) enclose the Peptidase S1 domain. Residues H95 and D147 each act as charge relay system in the active site. N-linked (GlcNAc...) asparagine glycans are attached at residues N170, N177, and N210. Intrachain disulfides connect C181/C254, C214/C233, and C244/C272. The active-site Charge relay system is S248. Residue N283 is glycosylated (N-linked (GlcNAc...) asparagine). A lipid anchor (GPI-anchor amidated asparagine) is attached at N298. A propeptide spans 299–324 (GLLRPDPVPLLLFLTLAWASSLLRPA) (removed in mature form).

It belongs to the peptidase S1 family. Testis.

The protein resides in the cell membrane. Functionally, could regulate proteolytic events associated with testicular germ cell maturation. The polypeptide is Testisin (Prss21) (Mus musculus (Mouse)).